Here is a 529-residue protein sequence, read N- to C-terminus: Cytochrome P450 monooxygenase 45 (529 aa).

A helical transmembrane segment spans residues 24-44 (VLTICILALLTFVLREIVLYF). N-linked (GlcNAc...) asparagine glycosylation is found at N185 and N322. C454 contributes to the heme binding site.

Belongs to the cytochrome P450 family. Heme is required as a cofactor.

It is found in the membrane. It participates in secondary metabolite biosynthesis. Functionally, cytochrome P450 monooxygenase that is able to use trans-stilbene as a substrate for oxidation. This is Cytochrome P450 monooxygenase 45 from Postia placenta (strain ATCC 44394 / Madison 698-R) (Brown rot fungus).